We begin with the raw amino-acid sequence, 165 residues long: Crossover junction endodeoxyribonuclease RuvC (165 aa).

Residues aspartate 7, glutamate 67, and aspartate 140 contribute to the active site. 3 residues coordinate Mg(2+): aspartate 7, glutamate 67, and aspartate 140.

Belongs to the RuvC family. In terms of assembly, homodimer which binds Holliday junction (HJ) DNA. The HJ becomes 2-fold symmetrical on binding to RuvC with unstacked arms; it has a different conformation from HJ DNA in complex with RuvA. In the full resolvosome a probable DNA-RuvA(4)-RuvB(12)-RuvC(2) complex forms which resolves the HJ. Mg(2+) serves as cofactor.

The protein resides in the cytoplasm. The enzyme catalyses Endonucleolytic cleavage at a junction such as a reciprocal single-stranded crossover between two homologous DNA duplexes (Holliday junction).. Its function is as follows. The RuvA-RuvB-RuvC complex processes Holliday junction (HJ) DNA during genetic recombination and DNA repair. Endonuclease that resolves HJ intermediates. Cleaves cruciform DNA by making single-stranded nicks across the HJ at symmetrical positions within the homologous arms, yielding a 5'-phosphate and a 3'-hydroxyl group; requires a central core of homology in the junction. The consensus cleavage sequence is 5'-(A/T)TT(C/G)-3'. Cleavage occurs on the 3'-side of the TT dinucleotide at the point of strand exchange. HJ branch migration catalyzed by RuvA-RuvB allows RuvC to scan DNA until it finds its consensus sequence, where it cleaves and resolves the cruciform DNA. This chain is Crossover junction endodeoxyribonuclease RuvC, found in Caldanaerobacter subterraneus subsp. tengcongensis (strain DSM 15242 / JCM 11007 / NBRC 100824 / MB4) (Thermoanaerobacter tengcongensis).